A 423-amino-acid chain; its full sequence is Subtilisin-like protease 2 (423 aa).

The signal sequence occupies residues 1–17 (MQLLNLGLLLLLPFVAG). Positions 18-123 (EIAPQPEPLR…VHPDQHVYLA (106 aa)) are excised as a propeptide. The 87-residue stretch at 37 to 123 (QYIVTLKEGL…VHPDQHVYLA (87 aa)) folds into the Inhibitor I9 domain. Positions 132–423 (RWGLGYMSSK…RKFTLPKNTK (292 aa)) constitute a Peptidase S8 domain. Active-site charge relay system residues include aspartate 170 and histidine 202. Asparagine 249, asparagine 262, and asparagine 349 each carry an N-linked (GlcNAc...) asparagine glycan. Serine 358 (charge relay system) is an active-site residue. An N-linked (GlcNAc...) asparagine glycan is attached at asparagine 389.

Belongs to the peptidase S8 family.

It is found in the secreted. Secreted subtilisin-like serine protease with keratinolytic activity that contributes to pathogenicity. This is Subtilisin-like protease 2 (SUB2) from Arthroderma otae (strain ATCC MYA-4605 / CBS 113480) (Microsporum canis).